A 67-amino-acid polypeptide reads, in one-letter code: MGMRMMFTMFLLVVLAITVVSFTSDHASDGRNTAANDKASNLMALRDECCPDPPCKASNPDLCDWRS.

An N-terminal signal peptide occupies residues 1-21 (MGMRMMFTMFLLVVLAITVVS). A propeptide spanning residues 22–46 (FTSDHASDGRNTAANDKASNLMALR) is cleaved from the precursor. 2 cysteine pairs are disulfide-bonded: Cys-49–Cys-55 and Cys-50–Cys-63. The lacks the Ser-Xaa-Pro motif that is crucial for potent interaction with nAChR stretch occupies residues 51–53 (PDP).

It belongs to the conotoxin A superfamily. In terms of tissue distribution, expressed by the venom duct.

It is found in the secreted. Its function is as follows. Alpha-conotoxins act on postsynaptic membranes, they bind to the nicotinic acetylcholine receptors (nAChR) and thus inhibit them. Has possibly a distinct nAChR binding mode from other alpha-conotoxins, due to a different three residue motif (lacks the Ser-Xaa-Pro motif). This is Alpha-conotoxin-like Qc1.1a from Conus quercinus (Oak cone).